The chain runs to 337 residues: NADH-quinone oxidoreductase subunit H (337 aa).

The next 9 membrane-spanning stretches (helical) occupy residues Gly9–Val29, Pro50–Phe70, Gly82–Ile102, Val115–Gly135, Ile161–Val181, Thr186–Ala206, Ser245–Ile265, Val273–Val293, and Phe313–Ile333.

Belongs to the complex I subunit 1 family. As to quaternary structure, NDH-1 is composed of 14 different subunits. Subunits NuoA, H, J, K, L, M, N constitute the membrane sector of the complex.

The protein localises to the cell inner membrane. It carries out the reaction a quinone + NADH + 5 H(+)(in) = a quinol + NAD(+) + 4 H(+)(out). NDH-1 shuttles electrons from NADH, via FMN and iron-sulfur (Fe-S) centers, to quinones in the respiratory chain. The immediate electron acceptor for the enzyme in this species is believed to be ubiquinone. Couples the redox reaction to proton translocation (for every two electrons transferred, four hydrogen ions are translocated across the cytoplasmic membrane), and thus conserves the redox energy in a proton gradient. This subunit may bind ubiquinone. The chain is NADH-quinone oxidoreductase subunit H from Parvibaculum lavamentivorans (strain DS-1 / DSM 13023 / NCIMB 13966).